Reading from the N-terminus, the 809-residue chain is Glycerol-3-phosphate acyltransferase (809 aa).

The HXXXXD motif signature appears at 309-314; sequence HRSHMD.

The protein belongs to the GPAT/DAPAT family.

The protein resides in the cell inner membrane. The enzyme catalyses sn-glycerol 3-phosphate + an acyl-CoA = a 1-acyl-sn-glycero-3-phosphate + CoA. It functions in the pathway phospholipid metabolism; CDP-diacylglycerol biosynthesis; CDP-diacylglycerol from sn-glycerol 3-phosphate: step 1/3. This Shewanella oneidensis (strain ATCC 700550 / JCM 31522 / CIP 106686 / LMG 19005 / NCIMB 14063 / MR-1) protein is Glycerol-3-phosphate acyltransferase.